Reading from the N-terminus, the 363-residue chain is Pyruvate dehydrogenase E1 component subunit alpha, mitochondrial (363 aa).

The N-terminal 2 residues, 1-2 (RN), are a transit peptide targeting the mitochondrion. At Lys36 the chain carries N6-acetyllysine; alternate. At Lys36 the chain carries N6-succinyllysine; alternate. Residues His65, Tyr91, Arg92, Ala130, Gly138, Val140, Asp169, Gly170, Ala171, Asn198, and Tyr200 each contribute to the pyruvate site. Residues Tyr91 and Arg92 each contribute to the thiamine diphosphate site. Residues Gly138, Val140, Asp169, Gly170, Ala171, and Asn198 each contribute to the thiamine diphosphate site. Asp169 contributes to the Mg(2+) binding site. Mg(2+)-binding residues include Asn198 and Tyr200. Ser205 bears the Phosphoserine; by PDK1 mark. Lys217 carries the post-translational modification N6-acetyllysine; alternate. N6-succinyllysine; alternate is present on Lys217. At Lys240 the chain carries N6-acetyllysine. Lys250 carries the N6-succinyllysine modification. His265 provides a ligand contact to thiamine diphosphate. Position 266 is a phosphoserine; by PDK1, PDK2, PDK3 and PDK4 (Ser266). Ser268 carries the post-translational modification Phosphoserine. Ser273 bears the Phosphoserine; by PDK1, PDK2, PDK3 and PDK4 mark. Tyr274 is modified (phosphotyrosine). An N6-acetyllysine; alternate modification is found at Lys286. Lys286 is subject to N6-succinyllysine; alternate. 2 positions are modified to N6-acetyllysine: Lys294 and Lys309. Lys358 carries the post-translational modification N6-succinyllysine.

In terms of assembly, heterotetramer of two PDHA1 and two PDHB subunits. The heterotetramer interacts with DLAT, and is part of the multimeric pyruvate dehydrogenase complex that contains multiple copies of pyruvate dehydrogenase (E1), dihydrolipoamide acetyltransferase (DLAT, E2) and lipoamide dehydrogenase (DLD, E3). These subunits are bound to an inner core composed of about 48 DLAT and 12 PDHX molecules. It depends on thiamine diphosphate as a cofactor. The cofactor is Mg(2+). In terms of processing, phosphorylation at Ser-205, Ser-266 and Ser-273 by PDK family kinases inactivates the enzyme; for this phosphorylation at a single site is sufficient. Phosphorylation at Ser-266 interferes with access to active site, and thereby inactivates the enzyme. Dephosphorylation at all three sites, i.e. at Ser-205, Ser-266 and Ser-273, is required for reactivation. Post-translationally, acetylation alters the phosphorylation pattern. Deacetylated by SIRT3.

Its subcellular location is the mitochondrion matrix. It catalyses the reaction N(6)-[(R)-lipoyl]-L-lysyl-[protein] + pyruvate + H(+) = N(6)-[(R)-S(8)-acetyldihydrolipoyl]-L-lysyl-[protein] + CO2. With respect to regulation, pyruvate dehydrogenase activity is inhibited by phosphorylation of PDHA1; it is reactivated by dephosphorylation. The pyruvate dehydrogenase complex catalyzes the overall conversion of pyruvate to acetyl-CoA and CO(2), and thereby links the glycolytic pathway to the tricarboxylic cycle. The chain is Pyruvate dehydrogenase E1 component subunit alpha, mitochondrial (PDHA) from Sminthopsis macroura (Stripe-faced dunnart).